We begin with the raw amino-acid sequence, 192 residues long: UPF0312 protein Pput_4854 (192 aa).

A signal peptide spans 1-23 (MLKKTFAALALGTALLSAGQAMA).

The protein belongs to the UPF0312 family. Type 1 subfamily.

The protein resides in the periplasm. The protein is UPF0312 protein Pput_4854 of Pseudomonas putida (strain ATCC 700007 / DSM 6899 / JCM 31910 / BCRC 17059 / LMG 24140 / F1).